A 133-amino-acid polypeptide reads, in one-letter code: MTLNLSVLTPNRIVWDSEVEEIVLSTNSGQIGILPNHAPIATAVDIGILRIRLNDQWLTMALMGGFARIGNNEITVLVNDAEKGSDIDPQEAQQTLELAEANVKKAEGRRQKIEANLALRRARTRVEAINPIS.

The protein belongs to the ATPase epsilon chain family. As to quaternary structure, F-type ATPases have 2 components, CF(1) - the catalytic core - and CF(0) - the membrane proton channel. CF(1) has five subunits: alpha(3), beta(3), gamma(1), delta(1), epsilon(1). CF(0) has three main subunits: a, b and c.

It is found in the plastid. The protein localises to the chloroplast thylakoid membrane. In terms of biological role, produces ATP from ADP in the presence of a proton gradient across the membrane. The protein is ATP synthase epsilon chain, chloroplastic of Nicotiana sylvestris (Wood tobacco).